An 819-amino-acid chain; its full sequence is Ribosome-releasing factor 2, mitochondrial (819 aa).

The transit peptide at 1 to 30 (MWKWNVRRWAGARVNISKNRLSVINVGSRY) directs the protein to the mitochondrion. Residues 39–327 (SKVRNIGIIA…AIVNYLPSPI (289 aa)) form the tr-type G domain. GTP contacts are provided by residues 48–55 (AHIDAGKT), 113–117 (DTPGH), and 165–168 (NKMD).

Belongs to the TRAFAC class translation factor GTPase superfamily. Classic translation factor GTPase family. EF-G/EF-2 subfamily.

It is found in the mitochondrion. Its function is as follows. Mitochondrial GTPase that mediates the disassembly of ribosomes from messenger RNA at the termination of mitochondrial protein biosynthesis. Not involved in the GTP-dependent ribosomal translocation step during translation elongation. The sequence is that of Ribosome-releasing factor 2, mitochondrial from Saccharomyces cerevisiae (strain RM11-1a) (Baker's yeast).